Consider the following 142-residue polypeptide: Large ribosomal subunit protein uL13 (142 aa).

This sequence belongs to the universal ribosomal protein uL13 family. In terms of assembly, part of the 50S ribosomal subunit.

Functionally, this protein is one of the early assembly proteins of the 50S ribosomal subunit, although it is not seen to bind rRNA by itself. It is important during the early stages of 50S assembly. The polypeptide is Large ribosomal subunit protein uL13 (Aliivibrio salmonicida (strain LFI1238) (Vibrio salmonicida (strain LFI1238))).